The primary structure comprises 139 residues: Small ribosomal subunit protein bS6 (139 aa).

A compositionally biased stretch (basic and acidic residues) spans 95–121 (AVTEQSEMLKAEESRNERRERRERPND). The interval 95-139 (AVTEQSEMLKAEESRNERRERRERPNDNAEGADGDDNSDSDNADE) is disordered. Positions 124–139 (EGADGDDNSDSDNADE) are enriched in acidic residues.

This sequence belongs to the bacterial ribosomal protein bS6 family.

Functionally, binds together with bS18 to 16S ribosomal RNA. The protein is Small ribosomal subunit protein bS6 of Pseudomonas aeruginosa (strain LESB58).